We begin with the raw amino-acid sequence, 233 residues long: Small ribosomal subunit protein uS3 (233 aa).

Residues Val39 to Arg107 enclose the KH type-2 domain.

Belongs to the universal ribosomal protein uS3 family. Part of the 30S ribosomal subunit. Forms a tight complex with proteins S10 and S14.

In terms of biological role, binds the lower part of the 30S subunit head. Binds mRNA in the 70S ribosome, positioning it for translation. The polypeptide is Small ribosomal subunit protein uS3 (Buchnera aphidicola subsp. Acyrthosiphon pisum (strain APS) (Acyrthosiphon pisum symbiotic bacterium)).